Reading from the N-terminus, the 348-residue chain is Phenylalanine--tRNA ligase alpha subunit (348 aa).

Glu-259 is a binding site for Mg(2+).

It belongs to the class-II aminoacyl-tRNA synthetase family. Phe-tRNA synthetase alpha subunit type 1 subfamily. In terms of assembly, tetramer of two alpha and two beta subunits. Requires Mg(2+) as cofactor.

It localises to the cytoplasm. It carries out the reaction tRNA(Phe) + L-phenylalanine + ATP = L-phenylalanyl-tRNA(Phe) + AMP + diphosphate + H(+). The protein is Phenylalanine--tRNA ligase alpha subunit of Limosilactobacillus reuteri (strain DSM 20016) (Lactobacillus reuteri).